A 476-amino-acid polypeptide reads, in one-letter code: Bifunctional protein HldE (476 aa).

Positions Met-1–Ser-319 are ribokinase. Asn-195–Glu-198 serves as a coordination point for ATP. Asp-264 is a catalytic residue. The tract at residues Met-345–Gln-476 is cytidylyltransferase.

In the N-terminal section; belongs to the carbohydrate kinase PfkB family. It in the C-terminal section; belongs to the cytidylyltransferase family. As to quaternary structure, homodimer.

The enzyme catalyses D-glycero-beta-D-manno-heptose 7-phosphate + ATP = D-glycero-beta-D-manno-heptose 1,7-bisphosphate + ADP + H(+). The catalysed reaction is D-glycero-beta-D-manno-heptose 1-phosphate + ATP + H(+) = ADP-D-glycero-beta-D-manno-heptose + diphosphate. It functions in the pathway nucleotide-sugar biosynthesis; ADP-L-glycero-beta-D-manno-heptose biosynthesis; ADP-L-glycero-beta-D-manno-heptose from D-glycero-beta-D-manno-heptose 7-phosphate: step 1/4. It participates in nucleotide-sugar biosynthesis; ADP-L-glycero-beta-D-manno-heptose biosynthesis; ADP-L-glycero-beta-D-manno-heptose from D-glycero-beta-D-manno-heptose 7-phosphate: step 3/4. Its function is as follows. Catalyzes the phosphorylation of D-glycero-D-manno-heptose 7-phosphate at the C-1 position to selectively form D-glycero-beta-D-manno-heptose-1,7-bisphosphate. Functionally, catalyzes the ADP transfer from ATP to D-glycero-beta-D-manno-heptose 1-phosphate, yielding ADP-D-glycero-beta-D-manno-heptose. This Shewanella denitrificans (strain OS217 / ATCC BAA-1090 / DSM 15013) protein is Bifunctional protein HldE.